The primary structure comprises 290 residues: Fructokinase (290 aa).

Residue Thr-130 participates in ATP binding. Zn(2+)-binding residues include His-153, Cys-169, His-172, and Cys-175. ATP contacts are provided by residues Pro-183 and 231-235 (GVMEK).

The protein belongs to the ROK (NagC/XylR) family. As to quaternary structure, homodimer. The cofactor is Mg(2+).

It catalyses the reaction D-fructose + ATP = D-fructose 6-phosphate + ADP + H(+). With respect to regulation, inactivated by EDTA. Inhibition by zinc ions (Potential). This chain is Fructokinase (scrK), found in Lactococcus lactis subsp. cremoris (Streptococcus cremoris).